Here is a 297-residue protein sequence, read N- to C-terminus: Dipicolinate synthase subunit A (297 aa).

NADP(+) is bound by residues 164 to 165 (RT), Arg-185, Thr-203, 242 to 244 (LAS), and 264 to 267 (APGL).

As to quaternary structure, dipicolinate synthase likely consists of DpaA and DpaB, since both proteins are required for DPA synthesis.

The enzyme catalyses (S)-2,3-dihydrodipicolinate + NADP(+) = dipicolinate + NADPH + H(+). Together with DpaB, catalyzes the conversion of dihydrodipicolinate to dipicolinate (DPA), which constitutes up to 10% of the dry weight of the spore. The polypeptide is Dipicolinate synthase subunit A (dpaA) (Bacillus subtilis (strain 168)).